The primary structure comprises 275 residues: Formamidopyrimidine-DNA glycosylase (275 aa).

Pro-2 serves as the catalytic Schiff-base intermediate with DNA. Glu-3 functions as the Proton donor in the catalytic mechanism. The active-site Proton donor; for beta-elimination activity is Lys-58. Residues His-93, Arg-111, and Arg-156 each contribute to the DNA site. The FPG-type zinc finger occupies 241 to 275 (FVYDRAGLPCRVCGTPIRQIVQGQRSTYFCPTCQR). The active-site Proton donor; for delta-elimination activity is the Arg-265.

Belongs to the FPG family. Monomer. The cofactor is Zn(2+).

It carries out the reaction Hydrolysis of DNA containing ring-opened 7-methylguanine residues, releasing 2,6-diamino-4-hydroxy-5-(N-methyl)formamidopyrimidine.. It catalyses the reaction 2'-deoxyribonucleotide-(2'-deoxyribose 5'-phosphate)-2'-deoxyribonucleotide-DNA = a 3'-end 2'-deoxyribonucleotide-(2,3-dehydro-2,3-deoxyribose 5'-phosphate)-DNA + a 5'-end 5'-phospho-2'-deoxyribonucleoside-DNA + H(+). In terms of biological role, involved in base excision repair of DNA damaged by oxidation or by mutagenic agents. Acts as a DNA glycosylase that recognizes and removes damaged bases. Has a preference for oxidized purines, such as 7,8-dihydro-8-oxoguanine (8-oxoG). Has AP (apurinic/apyrimidinic) lyase activity and introduces nicks in the DNA strand. Cleaves the DNA backbone by beta-delta elimination to generate a single-strand break at the site of the removed base with both 3'- and 5'-phosphates. In Burkholderia ambifaria (strain MC40-6), this protein is Formamidopyrimidine-DNA glycosylase.